Consider the following 166-residue polypeptide: Macrocypin-5a (166 aa).

Positions 20–39 (NIPGGMYASSKDGKDEPVTA) are disordered.

The protein belongs to the protease inhibitor I85 family.

Functionally, inhibits papain and cysteine cathepsin endopeptidases, and also inhibits cathepsins B and H, which exhibit both exopeptidase and endopeptidase activities. The protein is Macrocypin-5a of Macrolepiota procera (Parasol mushroom).